Consider the following 200-residue polypeptide: Holliday junction branch migration complex subunit RuvA (200 aa).

The domain I stretch occupies residues 1-64; it reads MIGHLRGIIV…EDAHTLYGFH (64 aa). Residues 65-143 form a domain II region; sequence NDHERRLFRA…RWHTNDTPSP (79 aa). The segment at 144-148 is flexible linker; that stretch reads EGLRS. Residues 149-200 form a domain III region; sequence SNTQPTQDAISALMALGYKPQEAKRAIDAIQKPDLSAETLIRLALKQMVLGT.

This sequence belongs to the RuvA family. In terms of assembly, homotetramer. Forms an RuvA(8)-RuvB(12)-Holliday junction (HJ) complex. HJ DNA is sandwiched between 2 RuvA tetramers; dsDNA enters through RuvA and exits via RuvB. An RuvB hexamer assembles on each DNA strand where it exits the tetramer. Each RuvB hexamer is contacted by two RuvA subunits (via domain III) on 2 adjacent RuvB subunits; this complex drives branch migration. In the full resolvosome a probable DNA-RuvA(4)-RuvB(12)-RuvC(2) complex forms which resolves the HJ.

It is found in the cytoplasm. The RuvA-RuvB-RuvC complex processes Holliday junction (HJ) DNA during genetic recombination and DNA repair, while the RuvA-RuvB complex plays an important role in the rescue of blocked DNA replication forks via replication fork reversal (RFR). RuvA specifically binds to HJ cruciform DNA, conferring on it an open structure. The RuvB hexamer acts as an ATP-dependent pump, pulling dsDNA into and through the RuvAB complex. HJ branch migration allows RuvC to scan DNA until it finds its consensus sequence, where it cleaves and resolves the cruciform DNA. This chain is Holliday junction branch migration complex subunit RuvA, found in Coxiella burnetii (strain CbuG_Q212) (Coxiella burnetii (strain Q212)).